Here is a 204-residue protein sequence, read N- to C-terminus: Venom allergen 5 (204 aa).

Disulfide bonds link Cys-4/Cys-17, Cys-8/Cys-101, Cys-26/Cys-94, and Cys-170/Cys-187. The SCP domain maps to 45-189 (LKEHNDFRQK…WHKHYLVCNY (145 aa)).

It belongs to the CRISP family. Venom allergen 5-like subfamily. In terms of tissue distribution, expressed by the venom gland.

The protein localises to the secreted. Functionally, may have an ancestral function in the promotion of ovum fertilization by sperm. The chain is Venom allergen 5 from Vespula flavopilosa (Downy yellowjacket).